Here is a 377-residue protein sequence, read N- to C-terminus: MANTSVRRRQLLSSVLLLQWLTTVLGVAWGPNPIDGSKHGQFPSLRRTEGVSQSGSGHKGSVYRIPLADMTFWSWMSYLKELPDIDESRNPILKRLLSGSFLRRDGSTTVNVRVPARELVRLLSLTPEQQREGVSAKVRLINLLDPKYSVYEPYLYREILPKRSPLLLPSLGEYRGAFLTYIFHPLSKGLVGDMLETGRSHPDVQVLAANMVAALKSLHNLGLLHRSIELNSFSVLPDGTVVLGGLDTAAPIGTETRLWVGFFGQETAPEIDRNFLADLALTQGRHTVKSDVYSLGVAFRNLVQLLGNGNIGPEDRGAVRQDHLELLDKLSQKMIEEEPGNRPTIEEIMKDPLFEGLNFEDIEEGKARPFRYKQNRL.

An N-terminal signal peptide occupies residues 1 to 26; sequence MANTSVRRRQLLSSVLLLQWLTTVLG. The segment at 39 to 58 is disordered; it reads HGQFPSLRRTEGVSQSGSGH. The Protein kinase domain occupies 48 to 354; the sequence is TEGVSQSGSG…IEEIMKDPLF (307 aa).

It belongs to the protein kinase superfamily. STE Ser/Thr protein kinase family. WNG subfamily. As to quaternary structure, forms a complex composed of BPK1, MCP4, MAG1, GRA8 and GRA9. Interacts with MCP4. Interacts with MAG1. Interacts with GRA8. Interacts with GRA9.

Its subcellular location is the secreted. Functionally, required for the growth, maintenance, and/or stability, and thus infectivity, of bradyzoite cysts. In Toxoplasma gondii, this protein is Bradyzoite pseudokinase 1.